A 793-amino-acid chain; its full sequence is Serine/threonine-protein kinase MARK1 (793 aa).

The segment at 1 to 40 is disordered; it reads MSARTPLPTVNERDTENHTSVDGYTETHIPPTKSSSRQNI. Thr5 bears the Phosphothreonine mark. Residues 60-311 form the Protein kinase domain; sequence YRLQKTIGKG…LEQIMKDRWM (252 aa). Residues 66 to 74 and Lys89 contribute to the ATP site; that span reads IGKGNFAKV. Asp182 serves as the catalytic Proton acceptor. At Thr208 the chain carries Phosphothreonine. The residue at position 215 (Thr215) is a Phosphothreonine; by LKB1 and TAOK1. Phosphoserine; by GSK3-beta is present on Ser219. The 42-residue stretch at 329–370 folds into the UBA domain; that stretch reads DLNDAKRIDIMVTMGFARDEINDALVSQKYDEVMATYILLGR. Disordered stretches follow at residues 377-499 and 517-697; these read GGES…GGSM and LQNG…KPRS. The segment covering 380–403 has biased composition (polar residues); the sequence is SLSSGNLCQRSRPSSDLNNSTLQS. Phosphoserine is present on residues Ser382, Ser390, Ser393, Ser403, Ser423, and Ser444. The segment covering 447-459 has biased composition (basic and acidic residues); that stretch reads SEQKEEWDKDTAR. Positions 462–473 are enriched in polar residues; the sequence is GSTTVGSKSEVT. Ser475 carries the phosphoserine modification. A compositionally biased stretch (polar residues) spans 487–499; sequence AGPSNNVYSGGSM. Composition is skewed to low complexity over residues 523 to 547 and 585 to 599; these read SSLT…GPSA and PAAS…ASTP. Phosphoserine is present on Ser588. Thr613 is subject to Phosphothreonine; by PKC/PRKCZ. Over residues 647–657 the composition is skewed to polar residues; the sequence is GTSTGIISKIT. Basic and acidic residues-rich tracts occupy residues 661–676 and 683–695; these read VRRD…RTDT and EPKD…EAKP. Ser666 carries the post-translational modification Phosphoserine. Residues 744–793 enclose the KA1 domain; that stretch reads DARQDSLVQWEMEVCKLPRLSLNGVRFKRISGTSIAFKNIASKIANELKL.

This sequence belongs to the protein kinase superfamily. CAMK Ser/Thr protein kinase family. SNF1 subfamily. In terms of assembly, interacts with MAPT/TAU. Requires Mg(2+) as cofactor. Post-translationally, phosphorylation at Thr-613 by PRKCZ/aPKC in polarized epithelial cells inhibits the kinase activity. Phosphorylated at Thr-215 by STK11/LKB1 in complex with STE20-related adapter-alpha (STRADA) pseudo kinase and CAB39. Phosphorylation at Thr-215 by TAOK1 activates the kinase activity, leading to phosphorylation and detachment of MAPT/TAU from microtubules. Phosphorylation at Ser-219 by GSK3-beta (GSK3B) inhibits the kinase activity. In terms of tissue distribution, highly expressed in brain and spleen and at lower levels in kidney and skeletal muscle.

Its subcellular location is the cell membrane. It is found in the cytoplasm. The protein resides in the cytoskeleton. The protein localises to the cell projection. It localises to the dendrite. The catalysed reaction is L-seryl-[protein] + ATP = O-phospho-L-seryl-[protein] + ADP + H(+). The enzyme catalyses L-threonyl-[protein] + ATP = O-phospho-L-threonyl-[protein] + ADP + H(+). It carries out the reaction L-seryl-[tau protein] + ATP = O-phospho-L-seryl-[tau protein] + ADP + H(+). It catalyses the reaction L-threonyl-[tau protein] + ATP = O-phospho-L-threonyl-[tau protein] + ADP + H(+). Its activity is regulated as follows. Activated by phosphorylation on Thr-215. Inhibited by phosphorylation at Ser-219. Functionally, serine/threonine-protein kinase. Involved in cell polarity and microtubule dynamics regulation. Phosphorylates DCX, MAP2 and MAP4. Phosphorylates the microtubule-associated protein MAPT/TAU. Involved in cell polarity by phosphorylating the microtubule-associated proteins MAP2, MAP4 and MAPT/TAU at KXGS motifs, causing detachment from microtubules, and their disassembly. Involved in the regulation of neuronal migration through its dual activities in regulating cellular polarity and microtubule dynamics, possibly by phosphorylating and regulating DCX. Also acts as a positive regulator of the Wnt signaling pathway, probably by mediating phosphorylation of dishevelled proteins (DVL1, DVL2 and/or DVL3). The polypeptide is Serine/threonine-protein kinase MARK1 (Rattus norvegicus (Rat)).